The chain runs to 609 residues: Glutamine--fructose-6-phosphate aminotransferase [isomerizing] (609 aa).

Cysteine 2 (nucleophile; for GATase activity) is an active-site residue. The 218-residue stretch at 2 to 219 (CGIVGYIGGR…DGECARLTRD (218 aa)) folds into the Glutamine amidotransferase type-2 domain. 2 consecutive SIS domains span residues 285-424 (SSDL…LRGT) and 458-599 (LARE…VDQP). The For Fru-6P isomerization activity role is filled by lysine 604.

Homodimer.

It is found in the cytoplasm. The enzyme catalyses D-fructose 6-phosphate + L-glutamine = D-glucosamine 6-phosphate + L-glutamate. Its function is as follows. Catalyzes the first step in hexosamine metabolism, converting fructose-6P into glucosamine-6P using glutamine as a nitrogen source. This Gloeobacter violaceus (strain ATCC 29082 / PCC 7421) protein is Glutamine--fructose-6-phosphate aminotransferase [isomerizing].